The primary structure comprises 260 residues: Thrombin-like enzyme flavoxobin (260 aa).

An N-terminal signal peptide occupies residues 1 to 18 (MVLIRVLANLLILQLSYA). Residues 19 to 24 (QKSSEL) constitute a propeptide that is removed on maturation. One can recognise a Peptidase S1 domain in the interval 25–251 (VIGGDECNIN…YNAWIQSIIA (227 aa)). Cystine bridges form between cysteine 31/cysteine 165, cysteine 52/cysteine 68, cysteine 100/cysteine 258, cysteine 144/cysteine 212, cysteine 176/cysteine 191, and cysteine 202/cysteine 227. Active-site charge relay system residues include histidine 67 and aspartate 112. Serine 206 serves as the catalytic Charge relay system.

It belongs to the peptidase S1 family. Snake venom subfamily. As to quaternary structure, monomer. As to expression, expressed by the venom gland.

It localises to the secreted. It carries out the reaction Selective cleavage of Arg-|-Xaa bond in fibrinogen, to form fibrin, and release fibrinopeptide A. The specificity of further degradation of fibrinogen varies with species origin of the enzyme.. Inhibited by alpha(2)-macroglobulin, diisopropylfluorophosphate (DFP) and PMSF. Low inhibition by tosyl-L-lysine chloromethyl ketone. Functionally, thrombin-like snake venom serine protease that clots fibrinogen (FGA) by releasing fibrinopeptide A. According to PubMed:8585090, only cleaves rabbit fibrinogen, whereas no specificity is described in PubMed:3910643 (tests done on bovine fibrinogen). Also acts as a C3 convertase that independently cleaves human C3 and kick-starts the complement cascade. Also increases urokinase-type plasminogen activator (PLAU) and plasminogen activator inhibitor (SERPINE1) in cultured bovine pulmonary artery endothelial cells. Dose-dependently inhibits collagen-induced platelet aggregation. This is Thrombin-like enzyme flavoxobin (TLF1) from Protobothrops flavoviridis (Habu).